We begin with the raw amino-acid sequence, 258 residues long: Acetylglutamate kinase (258 aa).

Substrate is bound by residues 41-42, Arg63, and Asn156; that span reads GG.

It belongs to the acetylglutamate kinase family. ArgB subfamily.

Its subcellular location is the cytoplasm. The catalysed reaction is N-acetyl-L-glutamate + ATP = N-acetyl-L-glutamyl 5-phosphate + ADP. It participates in amino-acid biosynthesis; L-arginine biosynthesis; N(2)-acetyl-L-ornithine from L-glutamate: step 2/4. Functionally, catalyzes the ATP-dependent phosphorylation of N-acetyl-L-glutamate. This chain is Acetylglutamate kinase, found in Bacillus pumilus (strain SAFR-032).